The chain runs to 618 residues: UvrABC system protein C (618 aa).

One can recognise a GIY-YIG domain in the interval 15 to 93 (RTPGVYLMKD…IKEHHPRYNI (79 aa)). Residues 203 to 238 (NNLLRELRERMKMAAEQMNYEEAAFLRDRIRAIEET) form the UVR domain.

Belongs to the UvrC family. In terms of assembly, interacts with UvrB in an incision complex.

The protein resides in the cytoplasm. In terms of biological role, the UvrABC repair system catalyzes the recognition and processing of DNA lesions. UvrC both incises the 5' and 3' sides of the lesion. The N-terminal half is responsible for the 3' incision and the C-terminal half is responsible for the 5' incision. This is UvrABC system protein C from Syntrophus aciditrophicus (strain SB).